Consider the following 149-residue polypeptide: Ribonuclease pancreatic (149 aa).

A signal peptide spans 1–25 (MGLEKSFILFSLLVLVLGWVQPSLS). The span at 30–40 (ADKFKRQHMDT) shows a compositional bias: basic and acidic residues. A disordered region spans residues 30-49 (ADKFKRQHMDTEGSSNSSPT). Residues Lys32 and Arg35 each coordinate substrate. The Proton acceptor role is filled by His37. Disulfide bonds link Cys51–Cys109, Cys65–Cys120, Cys83–Cys135, and Cys90–Cys97. An N-linked (GlcNAc...) asparagine glycan is attached at Asn62. 66–70 (KPVNT) provides a ligand contact to substrate. N-linked (GlcNAc...) asparagine glycosylation is present at Asn87. Substrate-binding residues include Lys91 and Arg110. His144 serves as the catalytic Proton donor.

Belongs to the pancreatic ribonuclease family. Monomer. Interacts with and forms tight 1:1 complexes with RNH1. Dimerization of two such complexes may occur. Interaction with RNH1 inhibits this protein. Pancreas.

Its subcellular location is the secreted. It carries out the reaction an [RNA] containing cytidine + H2O = an [RNA]-3'-cytidine-3'-phosphate + a 5'-hydroxy-ribonucleotide-3'-[RNA].. The catalysed reaction is an [RNA] containing uridine + H2O = an [RNA]-3'-uridine-3'-phosphate + a 5'-hydroxy-ribonucleotide-3'-[RNA].. Functionally, endonuclease that catalyzes the cleavage of RNA on the 3' side of pyrimidine nucleotides. Acts on single-stranded and double-stranded RNA. In Niviventer cremoriventer (Dark-tailed tree rat), this protein is Ribonuclease pancreatic (RNASE1).